A 510-amino-acid chain; its full sequence is Nectin-4 (510 aa).

Positions 1-31 (MPLSLGAEMWGPAAWLLLLLLLASFTGQRLA) are cleaved as a signal peptide. The region spanning 32–144 (GELETSDLVT…GSFQARLRLR (113 aa)) is the Ig-like V-type domain. At 32-349 (GELETSDLVT…GKQVDLVSAS (318 aa)) the chain is on the extracellular side. Cystine bridges form between cysteine 52–cysteine 127, cysteine 171–cysteine 223, and cysteine 270–cysteine 315. 2 consecutive Ig-like C2-type domains span residues 148 to 237 (PPLP…QRIT) and 248 to 331 (ASVR…VVVD). An N-linked (GlcNAc...) asparagine glycan is attached at asparagine 281. The chain crosses the membrane as a helical span at residues 350–370 (VVVVGVIAALLFCLLVVVVVL). Over 371 to 510 (MSRYHRRKAQ…IYINGRGHLV (140 aa)) the chain is Cytoplasmic. The segment covering 400–412 (RLHSHHSDPRNQP) has biased composition (basic and acidic residues). Residues 400-475 (RLHSHHSDPR…GRAEEEEDRD (76 aa)) form a disordered region.

The protein belongs to the nectin family. Self-associates. Interacts via its Ig-like V-type domain with NECTIN1 Ig-like V-type domain. Interacts via its C-terminus with AFDN. Interacts with TIGIT.

The protein resides in the cell membrane. It localises to the cell junction. The protein localises to the adherens junction. Functionally, seems to be involved in cell adhesion through trans-homophilic and -heterophilic interactions, the latter including specifically interactions with NECTIN1. Plays a role in the senescence-associated cell size enlargement via SFK/PI3K/Rac1 and thus promotes senescent cell survival. Also participates in the innate immune response by acting as a ligand for the receptor TIGIT to inhibit NK-cell activity. This Bos taurus (Bovine) protein is Nectin-4.